Consider the following 246-residue polypeptide: Probable transcriptional regulatory protein CA_C2295 (246 aa).

This sequence belongs to the TACO1 family.

Its subcellular location is the cytoplasm. This is Probable transcriptional regulatory protein CA_C2295 from Clostridium acetobutylicum (strain ATCC 824 / DSM 792 / JCM 1419 / IAM 19013 / LMG 5710 / NBRC 13948 / NRRL B-527 / VKM B-1787 / 2291 / W).